A 236-amino-acid chain; its full sequence is Large ribosomal subunit protein uL1 (236 aa).

This sequence belongs to the universal ribosomal protein uL1 family. Part of the 50S ribosomal subunit.

Binds directly to 23S rRNA. The L1 stalk is quite mobile in the ribosome, and is involved in E site tRNA release. Its function is as follows. Protein L1 is also a translational repressor protein, it controls the translation of the L11 operon by binding to its mRNA. This Heliobacterium modesticaldum (strain ATCC 51547 / Ice1) protein is Large ribosomal subunit protein uL1.